The sequence spans 261 residues: MVVVAAAPNPADGTPKVLLLSGQPASAAGAPAGQALPLMVPAQRGASPEAASGGLPQARKRQRLTHLSPEEKALRRKLKNRVAAQTARDRKKARMSELEQQVVDLEEENQKLLLENQLLREKTHGLVVENQELRQRLGMDALVAEEEAEAKGNEVRPVAGSAESAALRLRAPLQQVQAQLSPLQNISPWILAVLTLQIQSLISCWAFWTTWTQSCSSNALPQSLPAWRSSQRSTQKDPVPYQPPFLCQWGRHQPSWKPLMN.

The Cytoplasmic segment spans residues 1-185 (MVVVAAAPNP…VQAQLSPLQN (185 aa)). Residues 44–93 (RGASPEAASGGLPQARKRQRLTHLSPEEKALRRKLKNRVAAQTARDRKKA) form a disordered region. A phosphoserine mark is found at Ser-47 and Ser-68. Residues 70–133 (EEKALRRKLK…HGLVVENQEL (64 aa)) enclose the bZIP domain. The segment at 72 to 94 (KALRRKLKNRVAAQTARDRKKAR) is basic motif. Residues 75–92 (RRKLKNRVAAQTARDRKK) are nuclear localization signal (NLS); in isoforms 1 and isoform 2. The interval 98–133 (LEQQVVDLEEENQKLLLENQLLREKTHGLVVENQEL) is leucine-zipper. Residues 186–203 (ISPWILAVLTLQIQSLIS) traverse the membrane as a helical; Signal-anchor for type II membrane protein segment. At 204–261 (CWAFWTTWTQSCSSNALPQSLPAWRSSQRSTQKDPVPYQPPFLCQWGRHQPSWKPLMN) the chain is on the lumenal side. Residues 235 to 261 (QKDPVPYQPPFLCQWGRHQPSWKPLMN) are necessary for the translational pausing of its own mRNA.

This sequence belongs to the bZIP family. In terms of assembly, isoform 2 interacts with SIRT1. Isoform 2 interacts with PIK3R1 and PIK3R2; the interactions are direct and induce translocation of XBP1 isoform 2 into the nucleus and the unfolded protein response (UPR) XBP1-dependent target genes activation in a ER stress- and/or insulin-dependent but PI3K-independent manner. Isoform 2 interacts with FOXO1; the interaction is direct and leads to FOXO1 ubiquitination and degradation via the proteasome pathway in hepatocytes. Isoform 1 interacts with HM13. Isoform 1 interacts with RNF139; the interaction induces ubiquitination and degradation of isoform 1. Isoform 1 interacts (via luminal domain) with DERL1; the interaction obviates the need for ectodomain shedding prior HM13/SPP-mediated XBP1 isoform 1 cleavage. Isoform 1 interacts with isoform 2; the interaction sequesters isoform 2 from the nucleus and enhances isoform 2 degradation in the cytoplasm. Isoform 1 interacts with HDAC3 and AKT1; the interactions occur in endothelial cell (EC) under disturbed flow. Isoform 1 interacts with the oncoprotein FOS. Isoform 2 interacts with ATF6; the interaction occurs in a ER stress-dependent manner and is required for DNA binding to the unfolded protein response element (UPRE). Isoform 2 interacts with PIK3R1; the interaction is direct and induces translocation of XBP1 isoform 2 into the nucleus and the unfolded protein response (UPR) XBP1-dependent target genes activation in a ER stress- and/or insulin-dependent but PI3K-independent manner. Post-translationally, acetylated by EP300; acetylation positively regulates the transcriptional activity of XBP1 isoform 2. Isoform 2 is deacetylated by SIRT1; deacetylation negatively regulates the transcriptional activity of XBP1 isoform 2. In terms of processing, ubiquitinated, leading to proteasome-mediated degradation in response to ER stress. X-box-binding protein 1, cytoplasmic form and luminal form are produced by intramembrane proteolytic cleavage of ER membrane-anchored isoform 1 triggered by HM13/SPP in a DERL1-RNF139-dependent and VCP/p97-independent manner. X-box-binding protein 1, luminal form is ubiquitinated leading to proteasomal degradation. Expressed in plasma cells in rheumatoid synovium. Over-expressed in primary breast cancer and metastatic breast cancer cells. Isoform 1 and isoform 2 are expressed at higher level in proliferating as compared to confluent quiescent endothelial cells.

It is found in the endoplasmic reticulum. Its subcellular location is the nucleus. The protein localises to the cytoplasm. The protein resides in the endoplasmic reticulum membrane. It localises to the membrane. In terms of biological role, functions as a transcription factor during endoplasmic reticulum (ER) stress by regulating the unfolded protein response (UPR). Required for cardiac myogenesis and hepatogenesis during embryonic development, and the development of secretory tissues such as exocrine pancreas and salivary gland. Involved in terminal differentiation of B lymphocytes to plasma cells and production of immunoglobulins. Modulates the cellular response to ER stress in a PIK3R-dependent manner. Binds to the cis-acting X box present in the promoter regions of major histocompatibility complex class II genes. Involved in VEGF-induced endothelial cell (EC) proliferation and retinal blood vessel formation during embryonic development but also for angiogenesis in adult tissues under ischemic conditions. Also functions as a major regulator of the UPR in obesity-induced insulin resistance and type 2 diabetes for the management of obesity and diabetes prevention. Its function is as follows. Plays a role in the unconventional cytoplasmic splicing processing of its own mRNA triggered by the endoplasmic reticulum (ER) transmembrane endoribonuclease ERN1: upon ER stress, the emerging XBP1 polypeptide chain, as part of a mRNA-ribosome-nascent chain (R-RNC) complex, cotranslationally recruits its own unprocessed mRNA through transient docking to the ER membrane and translational pausing, therefore facilitating efficient IRE1-mediated XBP1 mRNA isoform 2 production. In endothelial cells (EC), associated with KDR, promotes IRE1-mediated XBP1 mRNA isoform 2 productions in a vascular endothelial growth factor (VEGF)-dependent manner, leading to EC proliferation and angiogenesis. Functions as a negative feed-back regulator of the potent transcription factor XBP1 isoform 2 protein levels through proteasome-mediated degradation, thus preventing the constitutive activation of the ER stress response signaling pathway. Inhibits the transactivation activity of XBP1 isoform 2 in myeloma cells. Acts as a weak transcriptional factor. Together with HDAC3, contributes to the activation of NFE2L2-mediated HMOX1 transcription factor gene expression in a PI(3)K/mTORC2/Akt-dependent signaling pathway leading to EC survival under disturbed flow/oxidative stress. Binds to the ER stress response element (ERSE) upon ER stress. Binds to the consensus 5'-GATGACGTG[TG]N(3)[AT]T-3' sequence related to cAMP responsive element (CRE)-like sequences. Binds the Tax-responsive element (TRE) present in the long terminal repeat (LTR) of T-cell leukemia virus type 1 (HTLV-I) and to the TPA response elements (TRE). Associates preferentially to the HDAC3 gene promoter region in a static flow-dependent manner. Binds to the CDH5/VE-cadherin gene promoter region. Functionally, functions as a stress-inducible potent transcriptional activator during endoplasmic reticulum (ER) stress by inducing unfolded protein response (UPR) target genes via binding to the UPR element (UPRE). Up-regulates target genes encoding ER chaperones and ER-associated degradation (ERAD) components to enhance the capacity of productive folding and degradation mechanism, respectively, in order to maintain the homeostasis of the ER under ER stress. Plays a role in the production of immunoglobulins and interleukin-6 in the presence of stimuli required for plasma cell differentiation. Induces phospholipid biosynthesis and ER expansion. Contributes to the VEGF-induced endothelial cell (EC) growth and proliferation in a Akt/GSK-dependent and/or -independent signaling pathway, respectively, leading to beta-catenin nuclear translocation and E2F2 gene expression. Promotes umbilical vein EC apoptosis and atherosclerotisis development in a caspase-dependent signaling pathway, and contributes to VEGF-induced EC proliferation and angiogenesis in adult tissues under ischemic conditions. Involved in the regulation of endostatin-induced autophagy in EC through BECN1 transcriptional activation. Plays a role as an oncogene by promoting tumor progression: stimulates zinc finger protein SNAI1 transcription to induce epithelial-to-mesenchymal (EMT) transition, cell migration and invasion of breast cancer cells. Involved in adipocyte differentiation by regulating lipogenic gene expression during lactation. Plays a role in the survival of both dopaminergic neurons of the substantia nigra pars compacta (SNpc), by maintaining protein homeostasis and of myeloma cells. Increases insulin sensitivity in the liver as a response to a high carbohydrate diet, resulting in improved glucose tolerance. Also improves glucose homeostasis in an ER stress- and/or insulin-independent manner through both binding and proteasome-induced degradation of the transcription factor FOXO1, hence resulting in suppression of gluconeogenic genes expression and in a reduction of blood glucose levels. Controls the induction of de novo fatty acid synthesis in hepatocytes by regulating the expression of a subset of lipogenic genes in an ER stress- and UPR-independent manner. Associates preferentially to the HDAC3 gene promoter region in a disturbed flow-dependent manner. Binds to the BECN1 gene promoter region. Binds to the CDH5/VE-cadherin gene promoter region. Binds to the ER stress response element (ERSE) upon ER stress. Binds to the 5'-CCACG-3' motif in the PPARG promoter. This chain is X-box-binding protein 1, found in Homo sapiens (Human).